Consider the following 232-residue polypeptide: Orotidine 5'-phosphate decarboxylase (232 aa).

Substrate is bound by residues Asp13, Lys35, 62-71 (DLKFHDIPNT), Thr122, Arg182, Gln191, Gly211, and Arg212. The active-site Proton donor is Lys64.

This sequence belongs to the OMP decarboxylase family. Type 1 subfamily. As to quaternary structure, homodimer.

The catalysed reaction is orotidine 5'-phosphate + H(+) = UMP + CO2. The protein operates within pyrimidine metabolism; UMP biosynthesis via de novo pathway; UMP from orotate: step 2/2. In terms of biological role, catalyzes the decarboxylation of orotidine 5'-monophosphate (OMP) to uridine 5'-monophosphate (UMP). This is Orotidine 5'-phosphate decarboxylase from Pseudomonas paraeruginosa (strain DSM 24068 / PA7) (Pseudomonas aeruginosa (strain PA7)).